The sequence spans 533 residues: Retinoic acid receptor RXR-beta (533 aa).

Residues methionine 1–valine 24 form a disordered region. A modulating region spans residues methionine 1 to leucine 204. The residue at position 25 (arginine 25) is an Omega-N-methylarginine. Residues arginine 37–valine 183 form a disordered region. A compositionally biased stretch (low complexity) spans alanine 46 to proline 61. Basic and acidic residues predominate over residues glutamate 67–serine 82. Low complexity predominate over residues proline 83 to glycine 94. Pro residues-rich tracts occupy residues alanine 95–serine 109 and alanine 118–leucine 129. Residues glycine 130–proline 143 are compositionally biased toward low complexity. Pro residues predominate over residues glycine 144 to phenylalanine 153. 2 NR C4-type zinc fingers span residues cysteine 205 to cysteine 225 and cysteine 241 to cysteine 265. The nuclear receptor DNA-binding region spans cysteine 205–methionine 270. The hinge stretch occupies residues lysine 271–alanine 295. Basic and acidic residues predominate over residues glutamine 276–aspartate 288. 2 disordered regions span residues glutamine 276–methionine 299 and glutamine 313–valine 336. One can recognise an NR LBD domain in the interval proline 296–proline 529. The span at glutamate 320–glycine 329 shows a compositional bias: gly residues.

It belongs to the nuclear hormone receptor family. NR2 subfamily. In terms of assembly, homodimer (in vitro). Heterodimer with other retinoic acid receptor family members. Binds DNA preferentially as a RAR/RXR heterodimer. Interacts with NR1H3. Interacts with AKAP13.

The protein localises to the nucleus. The protein resides in the cytoplasm. Functionally, receptor for retinoic acid. Retinoic acid receptors bind as heterodimers to their target response elements in response to their ligands, all-trans or 9-cis retinoic acid, and regulate gene expression in various biological processes. The RAR/RXR heterodimers bind to the retinoic acid response elements (RARE). The chain is Retinoic acid receptor RXR-beta (RXRB) from Canis lupus familiaris (Dog).